We begin with the raw amino-acid sequence, 352 residues long: Protein Wnt-11 (352 aa).

Positions 1-22 are cleaved as a signal peptide; that stretch reads MKIYFLLGTFLTFLLHTRICQG. Asparagine 38 and asparagine 88 each carry an N-linked (GlcNAc...) asparagine glycan. 5 disulfides stabilise this stretch: cysteine 78–cysteine 89, cysteine 128–cysteine 136, cysteine 138–cysteine 155, cysteine 207–cysteine 221, and cysteine 209–cysteine 216. Residue serine 213 is the site of O-palmitoleoyl serine; by PORCN attachment. Residues tyrosine 273 and tyrosine 280 each carry the sulfotyrosine modification. 6 disulfide bridges follow: cysteine 281–cysteine 312, cysteine 297–cysteine 307, cysteine 311–cysteine 351, cysteine 327–cysteine 342, cysteine 329–cysteine 339, and cysteine 334–cysteine 335. Asparagine 298 is a glycosylation site (N-linked (GlcNAc...) asparagine).

The protein belongs to the Wnt family. In terms of processing, glycosylation is required for protein secretion. Palmitoleoylation is required for efficient binding to frizzled receptors. Depalmitoleoylation leads to Wnt signaling pathway inhibition. As to expression, in embryos, expressed in the neural tube, dorsal somite, mesenchymal cells within the dorsal fin, branchial arches and heart muscle, becoming expressed throughout the myocardium by the tadpole stage (stage 45). Prior to neural crest cell migration, expressed in a domain flanking the neural crest on the medial or neural (the opposite side to wnt11b). Weakly expressed in the developing pronephros from stage 25, with expression increasing from stages 30 to 35.

It is found in the secreted. It localises to the extracellular space. The protein resides in the extracellular matrix. Functionally, ligand for members of the frizzled family of seven transmembrane receptors. Shares much functionality with wnt11b. Signals through a non-canonical Wnt pathway to activate Jun-N-terminal kinase (JNK) to regulate gastrulation movements. Acts in a non-cell-autonomous manner to control neural crest migration, probably acting as an extracellular signal from surrounding tissue, but is not required for neural crest induction. Acts redundantly with wnt11b during pronephros induction. Regulates cardiac morphogenesis through the activation of JNK, but is not required for cardiac differentiation. Essential for dorsal fin development; required for an epithelial to mesenchymal transformation event prior to migration of cells into the fin, and ultimately for maintenance of fin structure. Mediates dorsal fin development through a non-canonical pathway mediated by Ca(2+). This chain is Protein Wnt-11, found in Xenopus laevis (African clawed frog).